The sequence spans 59 residues: Large ribosomal subunit protein bL32 (59 aa).

Residues Met-1–Glu-59 form a disordered region. Residues Arg-49–Glu-59 show a composition bias toward basic residues.

It belongs to the bacterial ribosomal protein bL32 family.

This is Large ribosomal subunit protein bL32 from Methylobacillus flagellatus (strain ATCC 51484 / DSM 6875 / VKM B-1610 / KT).